A 705-amino-acid chain; its full sequence is Probable cyclic nucleotide-gated ion channel 16 (705 aa).

The Cytoplasmic segment spans residues 1–57; the sequence is MSNLHLYTSARFRNFPTTFSLRHHHNDPNNQRRRSIFSKLRDKTLDPGGDLITRWNH. Residues 58-78 form a helical membrane-spanning segment; sequence IFLITCLLALFLDPLYFYLPI. The Extracellular portion of the chain corresponds to 79 to 91; that stretch reads VQAGTACMSIDVR. The chain crosses the membrane as a helical span at residues 92–112; sequence FGIFVTCFRNLADLSFLIHIL. Residues 113–147 are Cytoplasmic-facing; the sequence is LKFKTAFVSKSSRVFGRGELVMDRREIAIRYLKSE. Residues 148–168 traverse the membrane as a helical segment; that stretch reads FVIDLAATLPLPQIMIWFVIP. Topologically, residues 169-180 are extracellular; it reads NAGEFRYAAHQN. A helical transmembrane segment spans residues 181–201; it reads HTLSLIVLIQYVPRFLVMLPL. Over 202–222 the chain is Cytoplasmic; it reads NRRIIKATGVAAKTAWSGAAY. The helical transmembrane segment at 223-243 threads the bilayer; sequence NLILYLLVSHVLGSVWYVLSI. The Extracellular portion of the chain corresponds to 244–353; that stretch reads QRQHECWRRE…LAASTLSSET (110 aa). A helical transmembrane segment spans residues 354–374; that stretch reads IFSCFICVAGLVFFSHLIGNV. The Cytoplasmic portion of the chain corresponds to 375–705; the sequence is QNYLQSTTAR…MFKPEDPGFF (331 aa). Residues 457–580 and Glu-528 contribute to the a nucleoside 3',5'-cyclic phosphate site; that span reads FFAQ…HSKK. The calmodulin-binding stretch occupies residues 573–588; it reads FRRLHSKKLQHAFRYY. In terms of domain architecture, IQ spans 593–622; that stretch reads RAWGTCFIQAAWRRYMKRKLAMELARQEEE. Disordered regions lie at residues 636–655 and 672–705; these read EEDM…SNNQ and RGVL…PGFF. The segment covering 642–655 has biased composition (low complexity); the sequence is SNNNNGDENSSNNQ.

Belongs to the cyclic nucleotide-gated cation channel (TC 1.A.1.5) family. Homotetramer or heterotetramer.

It localises to the cell membrane. Functionally, putative cyclic nucleotide-gated ion channel. This is Probable cyclic nucleotide-gated ion channel 16 (CNGC16) from Arabidopsis thaliana (Mouse-ear cress).